The sequence spans 149 residues: Small ribosomal subunit protein uS13 (149 aa).

The protein belongs to the universal ribosomal protein uS13 family. As to quaternary structure, part of the 30S ribosomal subunit. Forms a loose heterodimer with protein S19. Forms two bridges to the 50S subunit in the 70S ribosome.

In terms of biological role, located at the top of the head of the 30S subunit, it contacts several helices of the 16S rRNA. In the 70S ribosome it contacts the 23S rRNA (bridge B1a) and protein L5 of the 50S subunit (bridge B1b), connecting the 2 subunits; these bridges are implicated in subunit movement. This Methanococcus maripaludis (strain DSM 14266 / JCM 13030 / NBRC 101832 / S2 / LL) protein is Small ribosomal subunit protein uS13.